A 295-amino-acid chain; its full sequence is MPELPEVEVVRAGLERHVLGATIARVDVLHPRPVRRDLRGPAGFAAALTGRRIEAARRRGKYLWLPLDNGDALLGHLGMSGQLLVQPPDAPDERHLRVRLALEGADEGRELRFVDQRMFGGLSVSAGGADLPPEIAHIARDPLDPEFDDDDFVRRVRRRTSGVKRQLLDQNLISGVGNIYADEALWRARIHGERPGDRLTATRVRELLAHAREVMLAALGEGGTSFDALYVNVNGESGYFDRSLHAYGREGEACERCGTPIRRVAFMNRSSYFCPVCQPAPRRRRAASSRVRVPD.

The Schiff-base intermediate with DNA role is filled by P2. E3 acts as the Proton donor in catalysis. Residue K61 is the Proton donor; for beta-elimination activity of the active site. The DNA site is built by H95, R117, and R159. An FPG-type zinc finger spans residues 245 to 279; sequence HAYGREGEACERCGTPIRRVAFMNRSSYFCPVCQP. Catalysis depends on R269, which acts as the Proton donor; for delta-elimination activity.

It belongs to the FPG family. Monomer. Zn(2+) is required as a cofactor.

It catalyses the reaction Hydrolysis of DNA containing ring-opened 7-methylguanine residues, releasing 2,6-diamino-4-hydroxy-5-(N-methyl)formamidopyrimidine.. The enzyme catalyses 2'-deoxyribonucleotide-(2'-deoxyribose 5'-phosphate)-2'-deoxyribonucleotide-DNA = a 3'-end 2'-deoxyribonucleotide-(2,3-dehydro-2,3-deoxyribose 5'-phosphate)-DNA + a 5'-end 5'-phospho-2'-deoxyribonucleoside-DNA + H(+). Functionally, involved in base excision repair of DNA damaged by oxidation or by mutagenic agents. Acts as a DNA glycosylase that recognizes and removes damaged bases. Has a preference for oxidized purines, such as 7,8-dihydro-8-oxoguanine (8-oxoG). Has AP (apurinic/apyrimidinic) lyase activity and introduces nicks in the DNA strand. Cleaves the DNA backbone by beta-delta elimination to generate a single-strand break at the site of the removed base with both 3'- and 5'-phosphates. In Nocardioides sp. (strain ATCC BAA-499 / JS614), this protein is Formamidopyrimidine-DNA glycosylase.